A 361-amino-acid chain; its full sequence is S-adenosylmethionine:tRNA ribosyltransferase-isomerase (361 aa).

This sequence belongs to the QueA family. In terms of assembly, monomer.

The protein resides in the cytoplasm. It catalyses the reaction 7-aminomethyl-7-carbaguanosine(34) in tRNA + S-adenosyl-L-methionine = epoxyqueuosine(34) in tRNA + adenine + L-methionine + 2 H(+). The protein operates within tRNA modification; tRNA-queuosine biosynthesis. In terms of biological role, transfers and isomerizes the ribose moiety from AdoMet to the 7-aminomethyl group of 7-deazaguanine (preQ1-tRNA) to give epoxyqueuosine (oQ-tRNA). The polypeptide is S-adenosylmethionine:tRNA ribosyltransferase-isomerase (Actinobacillus pleuropneumoniae serotype 5b (strain L20)).